Consider the following 166-residue polypeptide: MGLFDKLFGSKENKSVEVEIYARISGEIVNIEDVPDVVFSEKIVGDGVAVRPIGNKIVAPVDGVIGKIFETNHAFSMESKEGVELFVHFGIDTVELKGEGFTRIAQEGQSVKRGDTVIEFDLALLESKAKSVLTPIVISNMDEISCIVKKSGEVVAGESVVLALKK.

A PTS EIIA type-1 domain is found at 36–140 (DVVFSEKIVG…SVLTPIVISN (105 aa)). Zn(2+) is bound by residues His73 and His88. His88 acts as the Tele-phosphohistidine intermediate; for EIIA activity in catalysis. His88 carries the phosphohistidine; by HPr modification.

Heterodimer with glycerol kinase (glpk). It depends on Zn(2+) as a cofactor.

It is found in the cytoplasm. The phosphoenolpyruvate-dependent sugar phosphotransferase system (sugar PTS), a major carbohydrate active transport system, catalyzes the phosphorylation of incoming sugar substrates concomitantly with their translocation across the cell membrane. The enzyme II complex composed of PtsG and Crr is involved in glucose transport. This chain is PTS system glucose-specific EIIA component (crr), found in Haemophilus influenzae (strain ATCC 51907 / DSM 11121 / KW20 / Rd).